Consider the following 434-residue polypeptide: Putative neutral sphingomyelinase (434 aa).

Glu-83 contributes to the Mg(2+) binding site. The Proton acceptor role is filled by His-318. The next 2 helical transmembrane spans lie at 366-388 and 392-414; these read IFFF…FEVF and FAVL…LIGL.

The protein belongs to the neutral sphingomyelinase family.

Its subcellular location is the membrane. It catalyses the reaction an N-(acyl)-sphingosylphosphocholine + H2O = an N-acyl-sphingoid base + phosphocholine + H(+). The enzyme catalyses a sphingomyelin + H2O = phosphocholine + an N-acylsphing-4-enine + H(+). The catalysed reaction is an N-acyl-15-methylhexadecasphing-4-enine-1-phosphocholine + H2O = an N-acyl-15-methylhexadecasphing-4-enine + phosphocholine + H(+). It functions in the pathway lipid metabolism; sphingolipid metabolism. Its function is as follows. Catalyzes the hydrolysis of sphingomyelin producing a ceramide (N-acyl-sphingoid base) and a phosphocholine. C.elegans contain specific sphingoid bases, which are unique or different in structure compared to the sphingoid bases found in other animals. Two examples of these distinctive compounds are: 15-methylhexadecasphinganine and 15-methylhexadecasphing-4-enine. The chain is Putative neutral sphingomyelinase from Caenorhabditis elegans.